The following is a 53-amino-acid chain: Metallocarboxypeptidase inhibitor (53 aa).

3 disulfide bridges follow: cysteine 9–cysteine 23, cysteine 15–cysteine 51, and cysteine 27–cysteine 38. Alanine 53 is a binding site for Zn(2+).

Monomer. Interacts (via C-terminus) with human CPA4.

Metallocarboxypeptidase inhibitor. Has an inhibitory effect on bovine CPA1 and CPB2, human CPA1, CPA2, CPA4, CPB1 and CPB2, and porcine CPB1. Does not inhibit D.melanogaster svr (carboxypeptidase D). Shows no activity against serine proteases subtilisin or bovine trypsin, cysteine protease papain, and aspartyl protease porcine pepsin. The chain is Metallocarboxypeptidase inhibitor from Nerita versicolor (Four-tooth nerite).